The sequence spans 81 residues: Neuronatin (81 aa).

It belongs to the neuronatin family.

In terms of biological role, may participate in the maintenance of segment identity in the hindbrain and pituitary development, and maturation or maintenance of the overall structure of the nervous system. May function as a regulatory subunit of ion channels. The polypeptide is Neuronatin (NNAT) (Homo sapiens (Human)).